The following is a 127-amino-acid chain: Fluoride-specific ion channel FluC (127 aa).

4 consecutive transmembrane segments (helical) span residues 4 to 24, 35 to 55, 71 to 91, and 103 to 123; these read LLLAVFIGGGTGSVARWLLSM, LGTLAANLIGAFIIGMGFAWF, TGFCGGLTTFSTFSAEVVFLL, and VFVNLLGSFAMTALAFWLFSA. Residues G75 and T78 each contribute to the Na(+) site.

This sequence belongs to the fluoride channel Fluc/FEX (TC 1.A.43) family.

The protein localises to the cell inner membrane. The enzyme catalyses fluoride(in) = fluoride(out). Its activity is regulated as follows. Na(+) is not transported, but it plays an essential structural role and its presence is essential for fluoride channel function. In terms of biological role, fluoride-specific ion channel. Important for reducing fluoride concentration in the cell, thus reducing its toxicity. The polypeptide is Fluoride-specific ion channel FluC (Shigella flexneri serotype 5b (strain 8401)).